A 645-amino-acid polypeptide reads, in one-letter code: Heat shock protein SSA2 (645 aa).

Serine 2 is modified (N-acetylserine). Residues 581–645 are disordered; it reads ANQTATQEEF…NDGPTVEEVD (65 aa). Positions 611–621 are enriched in low complexity; it reads AGATPSGAAGA.

It belongs to the heat shock protein 70 family. In terms of assembly, binds human histatin-5, an antifungal peptide from saliva.

It localises to the cytoplasm. Its subcellular location is the secreted. It is found in the cell wall. Its function is as follows. Heat shock protein that may play a role in the transport of polypeptides both across the mitochondrial membranes and into the endoplasmic reticulum. In terms of biological role, acts as a highly immunodominant antigen. Plays a role in the sensitivity to, and the import of candidacidal beta-defensin peptides. HSP70/SSA1 and SSA2 bind histatin-5, a peptide from human saliva, and mediates its fungicidal activity. SSA2 facilitates fungicidal activity of Hst 5 in binding and intracellular translocation, whereas HSP70/SSA1 appears to have a lesser functional role in Hst 5 toxicity. This Candida albicans (strain SC5314 / ATCC MYA-2876) (Yeast) protein is Heat shock protein SSA2.